The following is a 406-amino-acid chain: uncharacterized protein (406 aa).

The protein belongs to the mycobacterial PPE family.

This is an uncharacterized protein from Mycobacterium tuberculosis (strain CDC 1551 / Oshkosh).